The sequence spans 189 residues: Hypoxanthine/guanine phosphoribosyltransferase (189 aa).

The protein belongs to the purine/pyrimidine phosphoribosyltransferase family. Archaeal HPRT subfamily. As to quaternary structure, homodimer.

It is found in the cytoplasm. It catalyses the reaction IMP + diphosphate = hypoxanthine + 5-phospho-alpha-D-ribose 1-diphosphate. It carries out the reaction GMP + diphosphate = guanine + 5-phospho-alpha-D-ribose 1-diphosphate. The protein operates within purine metabolism; IMP biosynthesis via salvage pathway; IMP from hypoxanthine: step 1/1. Catalyzes a salvage reaction resulting in the formation of IMP that is energically less costly than de novo synthesis. This chain is Hypoxanthine/guanine phosphoribosyltransferase, found in Methanothrix soehngenii (strain ATCC 5969 / DSM 3671 / JCM 10134 / NBRC 103675 / OCM 69 / GP-6) (Methanosaeta concilii).